A 142-amino-acid chain; its full sequence is UPF0102 protein Bamb_0202 (142 aa).

The segment at 1–23 (MCHAAPAAPASGRGLPHGGGNFS) is disordered.

Belongs to the UPF0102 family.

The polypeptide is UPF0102 protein Bamb_0202 (Burkholderia ambifaria (strain ATCC BAA-244 / DSM 16087 / CCUG 44356 / LMG 19182 / AMMD) (Burkholderia cepacia (strain AMMD))).